Consider the following 322-residue polypeptide: GDSL esterase/lipase At2g04020 (322 aa).

The first 26 residues, 1 to 26, serve as a signal peptide directing secretion; sequence MGLPSSLESYLLLILLSFLNVSTIYS. The active-site Nucleophile is serine 50. The N-linked (GlcNAc...) asparagine glycan is linked to asparagine 260. Active-site residues include aspartate 296 and histidine 299.

The protein belongs to the 'GDSL' lipolytic enzyme family.

It is found in the secreted. In Arabidopsis thaliana (Mouse-ear cress), this protein is GDSL esterase/lipase At2g04020.